A 140-amino-acid chain; its full sequence is Large ribosomal subunit protein uL14 (140 aa).

Belongs to the universal ribosomal protein uL14 family. Part of the 50S ribosomal subunit. Forms a cluster with proteins L3 and L24e, part of which may contact the 16S rRNA in 2 intersubunit bridges.

Its function is as follows. Binds to 23S rRNA. Forms part of two intersubunit bridges in the 70S ribosome. The protein is Large ribosomal subunit protein uL14 of Aeropyrum pernix (strain ATCC 700893 / DSM 11879 / JCM 9820 / NBRC 100138 / K1).